The primary structure comprises 750 residues: Olfactomedin-like protein 2B (750 aa).

An N-terminal signal peptide occupies residues 1 to 22; that stretch reads MAKPRLLVLYFALIVVPAWVSS. Coiled-coil stretches lie at residues 40–68 and 179–213; these read AEDE…KVKA and KLEE…GKEN. N187 and N213 each carry an N-linked (GlcNAc...) asparagine glycan. 2 disordered regions span residues 346-437 and 452-484; these read TRRP…PPAV and VPPT…PEEE. Composition is skewed to polar residues over residues 354 to 384 and 393 to 413; these read QGHS…SDPS and PTLQ…LQPS. Over residues 416-430 the composition is skewed to low complexity; the sequence is VPATTVAHTATQQPA. The Olfactomedin-like domain maps to 493–750; the sequence is RCKDTLSTIT…QVTYHVIFAY (258 aa). C494 and C680 are oxidised to a cystine. The N-linked (GlcNAc...) asparagine glycan is linked to N695.

Homodimer. Binds to heparin and chondroitin sulfate E. O-glycosylated and N-glycosylated.

It localises to the secreted. The polypeptide is Olfactomedin-like protein 2B (OLFML2B) (Homo sapiens (Human)).